The following is a 995-amino-acid chain: Beta-agarase A (995 aa).

The first 20 residues, 1–20, serve as a signal peptide directing secretion; it reads MKIKFLSAAIAASLALPLSA. The interval 936 to 972 is disordered; it reads GTNIGVSHSGPEAPDPGEPVDPPIDPPTPPTGGVTGG. The segment covering 948–965 has biased composition (pro residues); it reads APDPGEPVDPPIDPPTPP.

It belongs to the glycosyl hydrolase 50 family.

It catalyses the reaction Hydrolysis of (1-&gt;4)-beta-D-galactosidic linkages in agarose, giving the tetramer as the predominant product.. Hydrolyzes agarose and also neoagarotetraose to yield neoagarobiose. The chain is Beta-agarase A (agaA) from Vibrio sp. (strain JT0107).